The following is a 211-amino-acid chain: Thiamine-phosphate synthase (211 aa).

Residues 37 to 41 (QLRIK) and Asn69 contribute to the 4-amino-2-methyl-5-(diphosphooxymethyl)pyrimidine site. Mg(2+)-binding residues include Asp70 and Asp89. Ser108 serves as a coordination point for 4-amino-2-methyl-5-(diphosphooxymethyl)pyrimidine. 134–136 (TQT) provides a ligand contact to 2-[(2R,5Z)-2-carboxy-4-methylthiazol-5(2H)-ylidene]ethyl phosphate. Lys137 contributes to the 4-amino-2-methyl-5-(diphosphooxymethyl)pyrimidine binding site. 2-[(2R,5Z)-2-carboxy-4-methylthiazol-5(2H)-ylidene]ethyl phosphate is bound by residues Gly166 and 186–187 (VS).

It belongs to the thiamine-phosphate synthase family. Mg(2+) serves as cofactor.

It carries out the reaction 2-[(2R,5Z)-2-carboxy-4-methylthiazol-5(2H)-ylidene]ethyl phosphate + 4-amino-2-methyl-5-(diphosphooxymethyl)pyrimidine + 2 H(+) = thiamine phosphate + CO2 + diphosphate. The catalysed reaction is 2-(2-carboxy-4-methylthiazol-5-yl)ethyl phosphate + 4-amino-2-methyl-5-(diphosphooxymethyl)pyrimidine + 2 H(+) = thiamine phosphate + CO2 + diphosphate. It catalyses the reaction 4-methyl-5-(2-phosphooxyethyl)-thiazole + 4-amino-2-methyl-5-(diphosphooxymethyl)pyrimidine + H(+) = thiamine phosphate + diphosphate. The protein operates within cofactor biosynthesis; thiamine diphosphate biosynthesis; thiamine phosphate from 4-amino-2-methyl-5-diphosphomethylpyrimidine and 4-methyl-5-(2-phosphoethyl)-thiazole: step 1/1. Its function is as follows. Condenses 4-methyl-5-(beta-hydroxyethyl)thiazole monophosphate (THZ-P) and 2-methyl-4-amino-5-hydroxymethyl pyrimidine pyrophosphate (HMP-PP) to form thiamine monophosphate (TMP). In Citrobacter koseri (strain ATCC BAA-895 / CDC 4225-83 / SGSC4696), this protein is Thiamine-phosphate synthase.